The following is a 491-amino-acid chain: Delayed-rectifier potassium channel regulatory subunit KCNS3 (491 aa).

Residues 1–182 (MVFGEFFHRP…IRMENPAYCL (182 aa)) are Cytoplasmic-facing. The helical transmembrane segment at 183–204 (SAKLIAISSLSVVLASIVAMCV) threads the bilayer. Over 205–220 (HSMSEFQNEDGEVDDP) the chain is Extracellular. A helical transmembrane segment spans residues 221–243 (VLEGVEIACIAWFTGELAVRLVA). At 244–254 (APCQKKFWKNP) the chain is on the cytoplasmic side. Residues 255-275 (LNIIDFVSIIPFYATLAVDTK) traverse the membrane as a helical segment. Over 276–285 (EEESEDIENM) the chain is Extracellular. Residues 286-306 (GKVVQILRLMRIFRILKLARH) form a helical; Voltage-sensor membrane-spanning segment. Residues 307–321 (SVGLRSLGATLRHSY) lie on the Cytoplasmic side of the membrane. The helical transmembrane segment at 322–343 (HEVGLLLLFLSVGISIFSVLIY) threads the bilayer. Topologically, residues 344 to 357 (SVEKDDHTSSLTSI) are extracellular. An intramembrane region (helical) is located at residues 358-369 (PICWWWATISMT). Positions 370-375 (TVGYGD) match the Selectivity filter motif. The stretch at 370–377 (TVGYGDTH) is an intramembrane region. Topologically, residues 378–384 (PVTLAGK) are extracellular. Residues 385–413 (LIASTCIICGILVVALPITIIFNKFSKYY) traverse the membrane as a helical segment. Topologically, residues 414–491 (QKQKDIDVDQ…TASLENCTAK (78 aa)) are cytoplasmic.

Belongs to the potassium channel family. S (TC 1.A.1.2) subfamily. Kv9.3/KCNS3 sub-subfamily. Heterotetramer with KCNB1. Does not form homomultimers.

It is found in the cell membrane. Potassium channel regulatory subunit that modulates the delayed rectifier potassium channel activity of KCNB1 by namely slowing down the deactivation and inactivation time constants. While it does not form functional channel on its own, it can form functional heterotetrameric channels with KCNB1. The sequence is that of Delayed-rectifier potassium channel regulatory subunit KCNS3 from Oryctolagus cuniculus (Rabbit).